A 204-amino-acid chain; its full sequence is Somatotropin (204 aa).

The signal sequence occupies residues 1–17 (MDRVLLLLSVLTLGVSS). Q18 carries the post-translational modification Pyrrolidone carboxylic acid. H36 provides a ligand contact to Zn(2+). Cysteines 69 and 177 form a disulfide. E186 provides a ligand contact to Zn(2+). Residues C194 and C202 are joined by a disulfide bond.

It belongs to the somatotropin/prolactin family.

The protein resides in the secreted. In terms of biological role, growth hormone plays an important role in growth control and is involved in the regulation of several anabolic processes. Implicated as an osmoregulatory substance important for seawater adaptation. The protein is Somatotropin (gh) of Larimichthys crocea (Large yellow croaker).